The following is a 285-amino-acid chain: Hydroxyethylthiazole kinase 1 (285 aa).

Substrate is bound at residue methionine 48. ATP contacts are provided by arginine 124 and serine 183. Substrate is bound at residue glycine 210.

The protein belongs to the Thz kinase family. It depends on Mg(2+) as a cofactor.

It catalyses the reaction 5-(2-hydroxyethyl)-4-methylthiazole + ATP = 4-methyl-5-(2-phosphooxyethyl)-thiazole + ADP + H(+). It functions in the pathway cofactor biosynthesis; thiamine diphosphate biosynthesis; 4-methyl-5-(2-phosphoethyl)-thiazole from 5-(2-hydroxyethyl)-4-methylthiazole: step 1/1. Its function is as follows. Catalyzes the phosphorylation of the hydroxyl group of 4-methyl-5-beta-hydroxyethylthiazole (THZ). This Methanosphaera stadtmanae (strain ATCC 43021 / DSM 3091 / JCM 11832 / MCB-3) protein is Hydroxyethylthiazole kinase 1.